The sequence spans 252 residues: Phosphate import ATP-binding protein PstB (252 aa).

The ABC transporter domain occupies 6–247 (IEVKNLNTYF…PKNKQTENYI (242 aa)). Residue 38–45 (GPSGCGKS) participates in ATP binding.

This sequence belongs to the ABC transporter superfamily. Phosphate importer (TC 3.A.1.7) family. The complex is composed of two ATP-binding proteins (PstB), two transmembrane proteins (PstC and PstA) and a solute-binding protein (PstS).

Its subcellular location is the cell membrane. It catalyses the reaction phosphate(out) + ATP + H2O = ADP + 2 phosphate(in) + H(+). Its function is as follows. Part of the ABC transporter complex PstSACB involved in phosphate import. Responsible for energy coupling to the transport system. This Methanosphaera stadtmanae (strain ATCC 43021 / DSM 3091 / JCM 11832 / MCB-3) protein is Phosphate import ATP-binding protein PstB.